The chain runs to 153 residues: Transthyretin (153 aa).

Positions 1–19 are cleaved as a signal peptide; it reads MASFKSFLLLALLAIVSEA. Cys34 is modified (sulfocysteine). Lys39 and Glu78 together coordinate L-thyroxine. The N-linked (GlcNAc...) asparagine glycan is linked to Asn81. Residue Ser141 coordinates L-thyroxine.

It belongs to the transthyretin family. As to quaternary structure, homotetramer. Dimer of dimers. In the homotetramer, subunits assemble around a central channel that can accommodate two ligand molecules. Interacts with rbp4. Post-translationally, sulfonation of the reactive cysteine Cys-34 enhances the stability of the native conformation of TTR, avoiding misassembly of the protein leading to amyloid formation. As to expression, detected in plasma (at protein level). Expressed during metamorphosis in tadpole liver, but not in tadpole brain nor adult liver. Between 1.5 and 3 days of development, also expressed in the mesoderm of the kidney.

The protein localises to the secreted. Thyroid hormone-binding protein, with a much higher binding affinity for triiodothyronine (T3) than for thyroxine (T4). Probably transports triiodothyronine from the bloodstream to the brain. The sequence is that of Transthyretin (ttr) from Xenopus laevis (African clawed frog).